Here is a 219-residue protein sequence, read N- to C-terminus: Phosphate-specific transport system accessory protein PhoU homolog (219 aa).

The protein belongs to the PhoU family. In terms of assembly, homodimer.

The protein localises to the cytoplasm. Functionally, plays a role in the regulation of phosphate uptake. Encoded together with proteins of the phosphate-specific transport (Pst) system in the polycistronic pstSCAB-phoU operon. The chain is Phosphate-specific transport system accessory protein PhoU homolog from Clostridium acetobutylicum (strain ATCC 824 / DSM 792 / JCM 1419 / IAM 19013 / LMG 5710 / NBRC 13948 / NRRL B-527 / VKM B-1787 / 2291 / W).